We begin with the raw amino-acid sequence, 1375 residues long: DNA-directed RNA polymerase subunit beta (1375 aa).

The protein belongs to the RNA polymerase beta chain family. As to quaternary structure, the RNAP catalytic core consists of 2 alpha, 1 beta, 1 beta' and 1 omega subunit. When a sigma factor is associated with the core the holoenzyme is formed, which can initiate transcription.

The enzyme catalyses RNA(n) + a ribonucleoside 5'-triphosphate = RNA(n+1) + diphosphate. DNA-dependent RNA polymerase catalyzes the transcription of DNA into RNA using the four ribonucleoside triphosphates as substrates. This is DNA-directed RNA polymerase subunit beta from Campylobacter jejuni subsp. jejuni serotype O:6 (strain 81116 / NCTC 11828).